Reading from the N-terminus, the 366-residue chain is tRNA/tmRNA (uracil-C(5))-methyltransferase (366 aa).

S-adenosyl-L-methionine contacts are provided by glutamine 190, tyrosine 218, asparagine 223, glutamate 239, and aspartate 299. Cysteine 324 (nucleophile) is an active-site residue. The Proton acceptor role is filled by glutamate 358.

This sequence belongs to the class I-like SAM-binding methyltransferase superfamily. RNA M5U methyltransferase family. TrmA subfamily.

It catalyses the reaction uridine(54) in tRNA + S-adenosyl-L-methionine = 5-methyluridine(54) in tRNA + S-adenosyl-L-homocysteine + H(+). It carries out the reaction uridine(341) in tmRNA + S-adenosyl-L-methionine = 5-methyluridine(341) in tmRNA + S-adenosyl-L-homocysteine + H(+). Functionally, dual-specificity methyltransferase that catalyzes the formation of 5-methyluridine at position 54 (m5U54) in all tRNAs, and that of position 341 (m5U341) in tmRNA (transfer-mRNA). In Escherichia coli O17:K52:H18 (strain UMN026 / ExPEC), this protein is tRNA/tmRNA (uracil-C(5))-methyltransferase.